Here is a 185-residue protein sequence, read N- to C-terminus: Ribosome-recycling factor (185 aa).

The tract at residues 137–158 (NQVKKLEKDKEISEDESKKAQE) is disordered. The span at 140–158 (KKLEKDKEISEDESKKAQE) shows a compositional bias: basic and acidic residues.

This sequence belongs to the RRF family.

The protein localises to the cytoplasm. Its function is as follows. Responsible for the release of ribosomes from messenger RNA at the termination of protein biosynthesis. May increase the efficiency of translation by recycling ribosomes from one round of translation to another. The chain is Ribosome-recycling factor from Helicobacter pylori (strain P12).